Reading from the N-terminus, the 2194-residue chain is Glutamate synthase [NADH], amyloplastic (2194 aa).

Residues 1–101 constitute an amyloplast transit peptide; the sequence is MSNSLSLTFT…LYDPAFDKDS (101 aa). Cys-102 functions as the Nucleophile in the catalytic mechanism. Residues 102–503 form the Glutamine amidotransferase type-2 domain; it reads CGVGFVAELN…PGMMLLVDFE (402 aa). The tract at residues 1021–1045 is disordered; it reads GGKSNTGEGGEQPSRMEPLADGSRN. 1193 to 1250 serves as a coordination point for FMN; that stretch reads LAETHQTLVANDLRGRTTLQTDGQLKTGRDVAIAALLGAEEYGFSTAPLITLGCIMMR. [3Fe-4S] cluster is bound by residues Cys-1246, Cys-1252, and Cys-1257. 1974–1988 is a binding site for NAD(+); the sequence is GGGDTGTDCIGTSIR.

It belongs to the glutamate synthase family. As to quaternary structure, monomer. It depends on [3Fe-4S] cluster as a cofactor. The cofactor is FAD. FMN serves as cofactor. Expressed in infected cells in root nodules. Barely detected in roots and stems.

The protein localises to the plastid. It localises to the amyloplast. It carries out the reaction 2 L-glutamate + NAD(+) = L-glutamine + 2-oxoglutarate + NADH + H(+). Its pathway is amino-acid biosynthesis; L-glutamate biosynthesis via GLT pathway; L-glutamate from 2-oxoglutarate and L-glutamine (NAD(+) route): step 1/1. The protein operates within energy metabolism; nitrogen metabolism. With respect to regulation, inhibited by malate, citrate, glutamate, NAD(+) and azaserine, but not by 2-2' dipyridil and N-ethylmaleimide. Functionally, required for the assimilation of symbiotically fixed nitrogen into amino acids in root nodules. The polypeptide is Glutamate synthase [NADH], amyloplastic (Medicago sativa (Alfalfa)).